The chain runs to 139 residues: Maximins 4/H3 type 6 (139 aa).

Positions 1 to 18 are cleaved as a signal peptide; it reads MNFKYIVAVSFLIASAYA. Residues 19–43 constitute a propeptide that is removed on maturation; it reads RSVQNDEQSLSQRDVLEEESLREIR. Asn70 is modified (asparagine amide). The propeptide occupies 74-118; the sequence is TAEDHEVMKRLEAVMRDLDSLDHPEEASERETRGFNQDEIAKEKR. Isoleucine amide is present on Ile138.

Belongs to the bombinin family. As to expression, expressed by the skin glands.

Its subcellular location is the secreted. Functionally, maximin-4 shows antibacterial activity against both Gram-positive and Gram-negative bacteria. It also shows antimicrobial activity against the fungus C.albicans, but not against A.flavus nor P.uticale. It has little hemolytic activity. It does not possess a significant cytotoxicity against tumor cell lines. It does not possess a significant anti-HIV activity. Its function is as follows. Maximin-H3 shows antibacterial activity against both Gram-positive and Gram-negative bacteria. It also shows antimicrobial activity against the fungus C.albicans. Shows strong hemolytic activity. This chain is Maximins 4/H3 type 6, found in Bombina maxima (Giant fire-bellied toad).